A 64-amino-acid polypeptide reads, in one-letter code: Conotoxin Pn-B01121 (64 aa).

The first 22 residues, Met1 to Ala22, serve as a signal peptide directing secretion. Positions Leu23–Asn48 are excised as a propeptide. At Trp63 the chain carries Tryptophan amide.

It belongs to the conotoxin T superfamily. In terms of processing, contains 2 disulfide bonds that can be either 'C1-C3, C2-C4' or 'C1-C4, C2-C3', since these disulfide connectivities have been observed for conotoxins with cysteine framework V (for examples, see AC P0DQQ7 and AC P81755). In terms of tissue distribution, expressed by the venom duct.

It is found in the secreted. This Conus pennaceus (Feathered cone) protein is Conotoxin Pn-B01121.